Consider the following 187-residue polypeptide: Hypoxanthine/guanine phosphoribosyltransferase (187 aa).

It belongs to the purine/pyrimidine phosphoribosyltransferase family. Archaeal HPRT subfamily. Homodimer.

Its subcellular location is the cytoplasm. The enzyme catalyses IMP + diphosphate = hypoxanthine + 5-phospho-alpha-D-ribose 1-diphosphate. It carries out the reaction GMP + diphosphate = guanine + 5-phospho-alpha-D-ribose 1-diphosphate. It participates in purine metabolism; IMP biosynthesis via salvage pathway; IMP from hypoxanthine: step 1/1. Its function is as follows. Catalyzes a salvage reaction resulting in the formation of IMP that is energically less costly than de novo synthesis. This chain is Hypoxanthine/guanine phosphoribosyltransferase, found in Methanocorpusculum labreanum (strain ATCC 43576 / DSM 4855 / Z).